The primary structure comprises 171 residues: Moubatin (171 aa).

The signal sequence occupies residues 1–15 (MMLVLTTLIFSFSAS). 3 disulfide bridges follow: cysteine 23/cysteine 144, cysteine 55/cysteine 166, and cysteine 118/cysteine 145.

The protein belongs to the calycin superfamily. Lipocalin family. Post-translationally, the N-terminus is blocked. As to expression, expressed in salivary glands.

Its subcellular location is the secreted. Functionally, tick salivary platelet aggregation inhibitor that plays an important part in the anti-hemostatic strategy of ticks. Acts by scavenging thromboxane A2 (TXA2), a potent inducer of platelet aggregation and blood vessel constriction. As a consequence, is a specific inhibitor of collagen-induced platelet aggregation. In addition, it also acts as a potent inhibitor of TXA2-mediated vasoconstriction. Has also been found to bind leukotriene B4 (LTB4) (which also derives from arachidonic acid, as TXA2) with affinities in the nanomolar range. It does not interact with complement protein C5. The polypeptide is Moubatin (Ornithodoros moubata (Soft tick)).